We begin with the raw amino-acid sequence, 399 residues long: Glutathione S-transferase LANCL1 (399 aa).

A2 bears the N-acetylalanine mark. K142 carries the post-translational modification N6-acetyllysine. C276 contributes to the Zn(2+) binding site. K317 is a glutathione binding site. Positions 322 and 323 each coordinate Zn(2+). 364-367 (RTAD) is a binding site for glutathione.

The protein belongs to the LanC-like protein family. Interacts with the C-terminal of STOM. Interacts with the EPS8 SH3 domain. Interaction with EPS8 is inhibited by glutathione binding. As to expression, detected in spinal cord (at protein level). Ubiquitous. Strongly expressed in brain, testis, alveolar macrophages and epithelial cells of the lung, kidney and intestine. Expression in brain increases during the first postnatal month and remaining high in adult.

Its subcellular location is the cytoplasm. It is found in the cell membrane. The catalysed reaction is RX + glutathione = an S-substituted glutathione + a halide anion + H(+). The enzyme catalyses 1-chloro-2,4-dinitrobenzene + glutathione = 2,4-dinitrophenyl-S-glutathione + chloride + H(+). Functionally, functions as a glutathione transferase. Catalyzes conjugation of the glutathione (GSH) to artificial substrates 1-chloro-2,4-dinitrobenzene (CDNB) and p-nitrophenyl acetate. Mitigates neuronal oxidative stress during normal postnatal development and in response to oxidative stresses probably through GSH antioxidant defense mechanism. May play a role in EPS8 signaling. Binds glutathione. This chain is Glutathione S-transferase LANCL1, found in Mus musculus (Mouse).